We begin with the raw amino-acid sequence, 259 residues long: MNWLEAFILGIIQGLTEFLPISSTGHLYLGRHLFRLDEAGLFLDTMLHIGTLLAVFIYYKKEFIYLIKNPFSKLMLLLIVGTIPAVVIGLLFKDFFEDISKTGITIGWEFLVSGFFLYMADKQKNGRKKMDDITYKDALIIGSFQAAAIFPAISRSGMTIVAALWRKLDRETAAYFSFLLSTPAIVGAIILQFVDVFQGKAESISSTSLIVGTLSAAFFGYIAVSWMIQYLKRHSLKVFAYYVWGLGILILMLQFTDVF.

8 consecutive transmembrane segments (helical) span residues 1–21 (MNWLEAFILGIIQGLTEFLPI), 39–59 (AGLFLDTMLHIGTLLAVFIYY), 71–91 (FSKLMLLLIVGTIPAVVIGLL), 99–119 (ISKTGITIGWEFLVSGFFLYM), 133–153 (ITYKDALIIGSFQAAAIFPAI), 174–194 (AYFSFLLSTPAIVGAIILQFV), 208–228 (SLIVGTLSAAFFGYIAVSWMI), and 239–259 (FAYYVWGLGILILMLQFTDVF).

Belongs to the UppP family.

It is found in the cell membrane. It carries out the reaction di-trans,octa-cis-undecaprenyl diphosphate + H2O = di-trans,octa-cis-undecaprenyl phosphate + phosphate + H(+). Functionally, catalyzes the dephosphorylation of undecaprenyl diphosphate (UPP). Confers resistance to bacitracin. The sequence is that of Undecaprenyl-diphosphatase 3 from Bacillus cereus (strain ATCC 14579 / DSM 31 / CCUG 7414 / JCM 2152 / NBRC 15305 / NCIMB 9373 / NCTC 2599 / NRRL B-3711).